Here is a 270-residue protein sequence, read N- to C-terminus: Orotidine 5'-phosphate decarboxylase (270 aa).

Catalysis depends on Lys95, which acts as the Proton donor.

The protein belongs to the OMP decarboxylase family. Type 2 subfamily.

It carries out the reaction orotidine 5'-phosphate + H(+) = UMP + CO2. The protein operates within pyrimidine metabolism; UMP biosynthesis via de novo pathway; UMP from orotate: step 2/2. The polypeptide is Orotidine 5'-phosphate decarboxylase (Azoarcus sp. (strain BH72)).